The following is a 291-amino-acid chain: Beta-lactamase CTX-M-97 (291 aa).

Positions 1 to 28 are cleaved as a signal peptide; the sequence is MMTQSIGRSMLTVMATLPLLFSSATLHA. The active-site Acyl-ester intermediate is Ser-73. Substrate is bound at residue 237 to 239; the sequence is KTG.

It belongs to the class-A beta-lactamase family.

It catalyses the reaction a beta-lactam + H2O = a substituted beta-amino acid. In terms of biological role, is probably capable of hydrolyzing cephalosporins such as ceftriaxone and ceftazidime, thus conferring resistance to these antibiotics. This is Beta-lactamase CTX-M-97 (bla) from Escherichia coli.